The primary structure comprises 121 residues: Small ribosomal subunit protein uS13 (121 aa).

The tract at residues 90–121 (RHRHGLPVRGQHTKNNARTRKGKAVAIAGKKK) is disordered.

Belongs to the universal ribosomal protein uS13 family. Part of the 30S ribosomal subunit. Forms a loose heterodimer with protein S19. Forms two bridges to the 50S subunit in the 70S ribosome.

In terms of biological role, located at the top of the head of the 30S subunit, it contacts several helices of the 16S rRNA. In the 70S ribosome it contacts the 23S rRNA (bridge B1a) and protein L5 of the 50S subunit (bridge B1b), connecting the 2 subunits; these bridges are implicated in subunit movement. Contacts the tRNAs in the A and P-sites. In Limosilactobacillus fermentum (strain NBRC 3956 / LMG 18251) (Lactobacillus fermentum), this protein is Small ribosomal subunit protein uS13.